We begin with the raw amino-acid sequence, 222 residues long: MSPTEAPKVRVTLFCILVGIVLAMTAVVSDHWAVLSPHMENHNTTCEAAHFGLWRICTKRIALGEDRSCGPITLPGEKNCSYFRHFNPGESSEIFEFTTQKEYSISAAAISVFSLGFLIMGTICALMAFRKKRDYLLRPASMFYVFAGLCLFVSLEVMRQSVKRMIDSEDTVWIEYYYSWSFACACAAFVLLFLGGISLLLFSLPRMPQNPWESCMDAEPEH.

The Cytoplasmic segment spans residues 1–10; the sequence is MSPTEAPKVR. The helical transmembrane segment at 11-29 threads the bilayer; that stretch reads VTLFCILVGIVLAMTAVVS. Topologically, residues 30–108 are extracellular; the sequence is DHWAVLSPHM…TQKEYSISAA (79 aa). 2 N-linked (GlcNAc...) asparagine glycosylation sites follow: N43 and N79. C57 and C80 are disulfide-bonded. Residues 109–129 traverse the membrane as a helical segment; sequence AISVFSLGFLIMGTICALMAF. At 130-134 the chain is on the cytoplasmic side; the sequence is RKKRD. Residues 135 to 155 traverse the membrane as a helical segment; the sequence is YLLRPASMFYVFAGLCLFVSL. Residues 156-179 lie on the Extracellular side of the membrane; that stretch reads EVMRQSVKRMIDSEDTVWIEYYYS. The chain crosses the membrane as a helical span at residues 180–204; that stretch reads WSFACACAAFVLLFLGGISLLLFSL. Over 205–222 the chain is Cytoplasmic; that stretch reads PRMPQNPWESCMDAEPEH.

The protein belongs to the PMP-22/EMP/MP20 family. CACNG subfamily. Component of a calcium channel complex consisting of a pore-forming alpha subunit (CACNA1S) and the ancillary subunits CACNB1 or CACNB2, CACNG1 and CACNA2D1. The channel complex contains alpha, beta, gamma and delta subunits in a 1:1:1:1 ratio, i.e. it contains either CACNB1 or CACNB2. N-glycosylated. As to expression, skeletal muscle (at protein level).

It localises to the cell membrane. The protein resides in the sarcolemma. Its function is as follows. Regulatory subunit of the voltage-gated calcium channel that gives rise to L-type calcium currents in skeletal muscle. Regulates channel inactivation kinetics. The chain is Voltage-dependent calcium channel gamma-1 subunit (CACNG1) from Oryctolagus cuniculus (Rabbit).